We begin with the raw amino-acid sequence, 601 residues long: Arginine--tRNA ligase (601 aa).

Residues 133 to 143 (PNTNKPLHLGH) carry the 'HIGH' region motif.

It belongs to the class-I aminoacyl-tRNA synthetase family. In terms of assembly, monomer.

Its subcellular location is the cytoplasm. The enzyme catalyses tRNA(Arg) + L-arginine + ATP = L-arginyl-tRNA(Arg) + AMP + diphosphate. The protein is Arginine--tRNA ligase of Flavobacterium psychrophilum (strain ATCC 49511 / DSM 21280 / CIP 103535 / JIP02/86).